A 725-amino-acid polypeptide reads, in one-letter code: MPQSTPSQEVQRVPWDNKPALKQITLRATIAGIAIGSLVLTSNFQFGLQTGWVSMMSLPSALLACAFFKNIWPLIFPNDRPFSDVENVYVQSMAVAVGTGPLAFGFVGVIPAIEKFLTNDESGGLREQGQSFTFRELLIWSTALAFFGIFFAVPLRKQVIVREKLPFPSGSATATLISVLNGTEILQEVSKSELLEMRQRRLNECPEVLQPNRDPEEADYLMNSSHSELGDYTATSQDGSSILSTGSENYRANIIILLKTFVVSSLYTMVSYFVPVIRSIPVFGKYLSNNYLWNFQPSPAYIGQGIIMGLPTVSYMLIGCFLGWGVLAPLARYKRWVPPDADVHDWEEGVQGWILWSSLSIMVADSVVAFIVVTVKSIVKFILIDDKAALLNNIIDDTFQSMLLEEERAINSSRRNTYVDGRQDTVRLVSRDNEIEVDSKHLVRYTTVISGCLVSSIICIVSIIYLFGIQVIPLYAIITALILALFLSILGIRALGETDLNPVSGIGKISQLIFAFIIPRDRPGSVLMNVVSGGIAEASAQQAGDLMQDLKTGHLLGASPRAQFCAQLIGACWSIILSSFMYLCYNKVYSIPSEQFRIPTAVVWIDCARLVTGKGLPDKALECSMILGVIFAVLSLIRNTYRDYGYGWILYIPSGVAVGVGIFNSPSFTIARFIGGWASHFWLKNHRGDLNAKTKMIVFSSGLVLGEGIFSVINMLFICLNVPHY.

9 helical membrane-spanning segments follow: residues 28-48 (ATIA…QFGL), 134-154 (FREL…FAVP), 254-274 (IIIL…SYFV), 353-373 (WILW…FIVV), 449-469 (ISGC…LFGI), 472-492 (IPLY…ILGI), 564-584 (FCAQ…MYLC), 644-664 (YGYG…GIFN), and 697-717 (IVFS…NMLF).

It belongs to the oligopeptide OPT transporter family.

The protein resides in the membrane. The polypeptide is Putative oligopeptide transporter YGL114W (Saccharomyces cerevisiae (strain ATCC 204508 / S288c) (Baker's yeast)).